Here is a 505-residue protein sequence, read N- to C-terminus: Maturase K (505 aa).

This sequence belongs to the intron maturase 2 family. MatK subfamily.

The protein localises to the plastid. The protein resides in the chloroplast. Usually encoded in the trnK tRNA gene intron. Probably assists in splicing its own and other chloroplast group II introns. The polypeptide is Maturase K (Allamanda cathartica (Yellow allamanda)).